The primary structure comprises 1009 residues: Glutamate receptor ionotropic, delta-1 (1009 aa).

An N-terminal signal peptide occupies residues 1-20 (MEALTLWLLPWICQCVSVRA). The interval 21-436 (DSIIHIGAIF…ERPMGSRLQG (416 aa)) is interaction with CBLN1. The Extracellular segment spans residues 21–562 (DSIIHIGAIF…SIFSLFAPFD (542 aa)). 3 disulfide bridges follow: Cys-80-Cys-351, Cys-96-Cys-128, and Cys-294-Cys-306. Asn-131 and Asn-200 each carry an N-linked (GlcNAc...) asparagine glycan. Residues Asn-422 and Asn-498 are each glycosylated (N-linked (GlcNAc...) asparagine). Ca(2+)-binding residues include Glu-527, Val-530, and Asp-531. Residues 563–583 (FAVWACIAAAIPVVGVLIFVL) traverse the membrane as a helical segment. The Cytoplasmic segment spans residues 584–637 (NRIQAVRAQSAAQPRPSASATLHSAIWIVYGAFVQQGGESSVNSMAMRIVMGSW). A helical membrane pass occupies residues 638-658 (WLFTLIVCSSYTANLAAFLTV). Residues 659–830 (SRMDNPIRTF…ADGKSLKLHS (172 aa)) are Extracellular-facing. Asp-753, Asp-755, and Ser-757 together coordinate Ca(2+). A helical membrane pass occupies residues 831-851 (FAGVFCILAIGLLLACLVAAL). Over 852 to 1009 (ELWWNSNRCH…ALDTSHGTSI (158 aa)) the chain is Cytoplasmic. Over residues 930 to 942 (FLPEQSSHGTSRT) the composition is skewed to polar residues. The segment at 930-954 (FLPEQSSHGTSRTLSSGPSSNLPLP) is disordered. Over residues 943 to 954 (LSSGPSSNLPLP) the composition is skewed to low complexity.

It belongs to the glutamate-gated ion channel (TC 1.A.10.1) family. GRID1 subfamily. As to quaternary structure, homodimer. Interacts (via extracellular N-terminal domain) with CBLN1 (via C1q domain), and more weakly with CBLN2; the interactions mediate the trans-synaptic adhesion complexes also with neurexins and are required for ligand-gated cation channel activity.

It localises to the postsynaptic cell membrane. It catalyses the reaction Ca(2+)(in) = Ca(2+)(out). The catalysed reaction is Na(+)(in) = Na(+)(out). Functionally, member of the ionotropic glutamate receptor family, which plays a crucial role in synaptic organization and signal transduction in the central nervous system. Although it shares structural features with ionotropic glutamate receptors, does not bind glutamate as a primary ligand. Instead, forms trans-synaptic adhesion complexes with presynaptic neurexins and cerebellins, regulating NMDA and AMPA receptor activity and influencing synaptic plasticity through signal transduction. In the presence of neurexins and cerebellins, forms cation-selective channels that are proposed to be gated by glycine and D-serine. However, recent research disputes this ligand-gated cation channel activity. Cation-selective ion channel can be triggered by GRM1 in dopaminergic neurons. Also acts as a receptor for GABA, modulating inhibitory synaptic plasticity through non-ionotropic mechanisms. The polypeptide is Glutamate receptor ionotropic, delta-1 (Homo sapiens (Human)).